The chain runs to 673 residues: UvrABC system protein B (673 aa).

Residues 26–183 (EGLEDGLAHQ…RRLAELQYAR (158 aa)) enclose the Helicase ATP-binding domain. Residue 39-46 (GVTGSGKT) coordinates ATP. The short motif at 92–115 (YYDYYQPEAYVPSSDTFIEKDASV) is the Beta-hairpin element. The region spanning 431–597 (QVDDLLSEIR…GLNKKVVDIL (167 aa)) is the Helicase C-terminal domain. Positions 608-627 (AKGRGKSRPIVEPDNVPMDM) are disordered. The region spanning 633-668 (QQKIHELEGLMMQHAQNLEFEEAAQIRDQLHLLREL) is the UVR domain.

This sequence belongs to the UvrB family. As to quaternary structure, forms a heterotetramer with UvrA during the search for lesions. Interacts with UvrC in an incision complex.

The protein localises to the cytoplasm. In terms of biological role, the UvrABC repair system catalyzes the recognition and processing of DNA lesions. A damage recognition complex composed of 2 UvrA and 2 UvrB subunits scans DNA for abnormalities. Upon binding of the UvrA(2)B(2) complex to a putative damaged site, the DNA wraps around one UvrB monomer. DNA wrap is dependent on ATP binding by UvrB and probably causes local melting of the DNA helix, facilitating insertion of UvrB beta-hairpin between the DNA strands. Then UvrB probes one DNA strand for the presence of a lesion. If a lesion is found the UvrA subunits dissociate and the UvrB-DNA preincision complex is formed. This complex is subsequently bound by UvrC and the second UvrB is released. If no lesion is found, the DNA wraps around the other UvrB subunit that will check the other stand for damage. The sequence is that of UvrABC system protein B from Escherichia coli O81 (strain ED1a).